A 389-amino-acid polypeptide reads, in one-letter code: Lipid-A-disaccharide synthase (389 aa).

This sequence belongs to the LpxB family.

The enzyme catalyses a lipid X + a UDP-2-N,3-O-bis[(3R)-3-hydroxyacyl]-alpha-D-glucosamine = a lipid A disaccharide + UDP + H(+). The protein operates within bacterial outer membrane biogenesis; LPS lipid A biosynthesis. Its function is as follows. Condensation of UDP-2,3-diacylglucosamine and 2,3-diacylglucosamine-1-phosphate to form lipid A disaccharide, a precursor of lipid A, a phosphorylated glycolipid that anchors the lipopolysaccharide to the outer membrane of the cell. The sequence is that of Lipid-A-disaccharide synthase from Histophilus somni (strain 2336) (Haemophilus somnus).